A 225-amino-acid chain; its full sequence is PKHD-type hydroxylase YbiX (225 aa).

Positions 78–177 (TLSTPLFNRY…RVASFMWIQS (100 aa)) constitute a Fe2OG dioxygenase domain. The Fe cation site is built by histidine 96, aspartate 98, and histidine 158. Arginine 168 is a 2-oxoglutarate binding site.

It depends on Fe(2+) as a cofactor. L-ascorbate is required as a cofactor.

In Escherichia coli O81 (strain ED1a), this protein is PKHD-type hydroxylase YbiX.